Here is a 219-residue protein sequence, read N- to C-terminus: ATP-dependent Clp protease proteolytic subunit 3 (219 aa).

The active-site Nucleophile is the S112. Residue H137 is part of the active site.

Belongs to the peptidase S14 family. As to quaternary structure, fourteen ClpP subunits assemble into 2 heptameric rings which stack back to back to give a disk-like structure with a central cavity, resembling the structure of eukaryotic proteasomes.

It localises to the cytoplasm. The enzyme catalyses Hydrolysis of proteins to small peptides in the presence of ATP and magnesium. alpha-casein is the usual test substrate. In the absence of ATP, only oligopeptides shorter than five residues are hydrolyzed (such as succinyl-Leu-Tyr-|-NHMec, and Leu-Tyr-Leu-|-Tyr-Trp, in which cleavage of the -Tyr-|-Leu- and -Tyr-|-Trp bonds also occurs).. Functionally, cleaves peptides in various proteins in a process that requires ATP hydrolysis. Has a chymotrypsin-like activity. Plays a major role in the degradation of misfolded proteins. The chain is ATP-dependent Clp protease proteolytic subunit 3 from Streptomyces avermitilis (strain ATCC 31267 / DSM 46492 / JCM 5070 / NBRC 14893 / NCIMB 12804 / NRRL 8165 / MA-4680).